A 233-amino-acid polypeptide reads, in one-letter code: LexA repressor (233 aa).

The H-T-H motif DNA-binding region spans phenylalanine 26 to serine 46. Active-site for autocatalytic cleavage activity residues include serine 153 and lysine 191.

This sequence belongs to the peptidase S24 family. In terms of assembly, homodimer.

It carries out the reaction Hydrolysis of Ala-|-Gly bond in repressor LexA.. Functionally, represses a number of genes involved in the response to DNA damage (SOS response), including recA and lexA. In the presence of single-stranded DNA, RecA interacts with LexA causing an autocatalytic cleavage which disrupts the DNA-binding part of LexA, leading to derepression of the SOS regulon and eventually DNA repair. The chain is LexA repressor from Erythrobacter litoralis (strain HTCC2594).